The primary structure comprises 410 residues: MKKEVVVIGGGIVGLSCAYSMHKLGHKVCVIEKSDGANGTSFGNAGLISAFKKAPLSCPGVVLDTLKLMLKNQAPLKFHFGLNLKLYQWILKFVKSANAKSTHRTMALFERYGWLSVDIYHQMLKDGMDFWYKEDGLLMIYTLEESFEKKLKTCDDSGAYKILSAKETKEYMPIVNDNICGSVLLTENAHVDPGEVMHSLQEYLQNAGVEFLYNEEVIDFEFKNNLIEGVITHKEKIQAETIILATGANPTLIKKTKNDFLMMGAKGYSITFKMPEELKPKTSSLFADIFMAMTPRRDTVRITSKLELNTNNALIDKEQIANMKKNLAAFTQPFEMKDAIEWCGFRPLTPNDIPYLGYDKRYKNLIHATGLGWLGITFGPAIGKIIANLSQDGANEKNADIMLFSAFFRD.

FAD is bound at residue 9–14 (GGGIVG).

Belongs to the DadA oxidoreductase family. The cofactor is FAD.

Its subcellular location is the cell inner membrane. The enzyme catalyses a D-alpha-amino acid + a quinone + H2O = a 2-oxocarboxylate + a quinol + NH4(+). Activity is markedly inhibited by benzoate, and moderately by SH reagents such as p-hydroxymercuribenzoate, iodoacetamide, and iodoacetate. Functionally, catalyzes the oxidative deamination of D-amino acids. Has broad substrate specificity; is mostly active on D-proline, and to a lesser extent, on several other D-amino acids such as D-alanine, D-phenylalanine and D-serine. Mediates electron transport from D-proline to coenzyme Q1 in vitro, and is involved in the electron transport chain from D-proline to the c-type cytochrome in vivo. The sequence is that of D-amino acid dehydrogenase from Helicobacter pylori (Campylobacter pylori).